The sequence spans 329 residues: UDP-N-acetylenolpyruvoylglucosamine reductase (329 aa).

One can recognise an FAD-binding PCMH-type domain in the interval 28–192 (RVGGPADLLC…ARVEVRLHAG (165 aa)). R172 is an active-site residue. Positions 202–227 (REDRERRRATQPLDRPTFGSTFTNPP) are disordered. The active-site Proton donor is the S221. The active site involves E291. Residues 307–329 (DGHAAAGGGPGAASGGVRPPEAT) form a disordered region. A compositionally biased stretch (gly residues) spans 311–320 (AAGGGPGAAS).

Belongs to the MurB family. The cofactor is FAD.

It is found in the cytoplasm. The enzyme catalyses UDP-N-acetyl-alpha-D-muramate + NADP(+) = UDP-N-acetyl-3-O-(1-carboxyvinyl)-alpha-D-glucosamine + NADPH + H(+). It participates in cell wall biogenesis; peptidoglycan biosynthesis. Cell wall formation. This is UDP-N-acetylenolpyruvoylglucosamine reductase from Anaeromyxobacter sp. (strain K).